A 185-amino-acid chain; its full sequence is Homeobox protein TGIF2LY (185 aa).

Disordered regions lie at residues methionine 1–proline 58 and arginine 166–glutamate 185. The span at alanine 21–aspartate 39 shows a compositional bias: polar residues. The segment at residues glutamate 48–aspartate 111 is a DNA-binding region (homeobox; TALE-type).

The protein belongs to the TALE/TGIF homeobox family. In terms of tissue distribution, specifically expressed in adult testis.

Its subcellular location is the nucleus. Functionally, may have a transcription role in testis. May act as a competitor/regulator of TGIF2LX. The chain is Homeobox protein TGIF2LY (TGIF2LY) from Homo sapiens (Human).